A 374-amino-acid polypeptide reads, in one-letter code: Ras-related GTP-binding protein B (374 aa).

Residue methionine 1 is modified to N-acetylmethionine. The segment covering methionine 1–valine 15 has biased composition (basic and acidic residues). A disordered region spans residues methionine 1 to leucine 30. GTP contacts are provided by serine 49 and glycine 50. GDP contacts are provided by glycine 50, serine 51, glycine 52, lysine 53, threonine 54, serine 55, threonine 69, and threonine 75. GTP is bound by residues glycine 52, lysine 53, threonine 54, serine 55, threonine 69, threonine 75, glycine 126, and histidine 188. Residues histidine 188 and aspartate 191 each contribute to the GDP site. Lysine 203 participates in a covalent cross-link: Glycyl lysine isopeptide (Lys-Gly) (interchain with G-Cter in ubiquitin). GDP-binding residues include leucine 209 and isoleucine 225. Isoleucine 225 is a GTP binding site. Glycyl lysine isopeptide (Lys-Gly) (interchain with G-Cter in ubiquitin) cross-links involve residues lysine 281, lysine 291, and lysine 305.

This sequence belongs to the GTR/RAG GTP-binding protein family. As to quaternary structure, interacts with RRAGC and RRAGD; heterodimerization stabilizes RRAG proteins. The GTP-bound form of RRAGB (in complex with the GDP-bound form of RRAGC or RRAGD) interacts with RPTOR, thereby promoting recruitment of mTORC1 to the lysosomes. Component of the lysosomal folliculin complex (LFC), composed of FLCN, FNIP1 (or FNIP2), RagA/RRAGA or RagB/RRAGB GDP-bound, RagC/RRAGC or RagD/RRAGD GTP-bound, and Ragulator. Interacts with SH3BP4; the interaction with this negative regulator is most probably direct, preferentially occurs with the inactive GDP-bound form of RRAGB, is negatively regulated by amino acids and prevents interaction with RPTOR. Interacts with the GATOR1 complex; inactivates RRAGB. The Rag heterodimer interacts with SLC38A9; the probable amino acid sensor. Interacts with SESN1, SESN2 and SESN3.

The protein localises to the cytoplasm. It localises to the lysosome membrane. It catalyses the reaction GTP + H2O = GDP + phosphate + H(+). With respect to regulation, the activation of GTP-binding proteins is generally mediated by a guanine exchange factor (GEF), while inactivation through hydrolysis of bound GTP is catalyzed by a GTPase activating protein (GAP). The Ragulator complex functions as a GEF and promotes the active GTP-bound form. The GATOR1 complex functions as a GAP and stimulates RRAGB GTPase activity to turn it into its inactive GDP-bound form, preventing mTORC1 recruitment and activation. Its function is as follows. Guanine nucleotide-binding protein that plays a crucial role in the cellular response to amino acid availability through regulation of the mTORC1 signaling cascade. Forms heterodimeric Rag complexes with RagC/RRAGC or RagD/RRAGD and cycles between an inactive GDP-bound and an active GTP-bound form: RagB/RRAGB is in its active form when GTP-bound RagB/RRAGB forms a complex with GDP-bound RagC/RRAGC (or RagD/RRAGD) and in an inactive form when GDP-bound RagB/RRAGB heterodimerizes with GTP-bound RagC/RRAGC (or RagD/RRAGD). In its GTP-bound active form, promotes the recruitment of mTORC1 to the lysosomes and its subsequent activation by the GTPase RHEB. Involved in the RCC1/Ran-GTPase pathway. This chain is Ras-related GTP-binding protein B, found in Mus musculus (Mouse).